A 3933-amino-acid polypeptide reads, in one-letter code: Circularly permutated Ras protein 2 (3933 aa).

Residues 12–46 (VHEVKKQELESILLQQEQEKQAKEEKESIKDTDDK) are a coiled coil. Disordered stretches follow at residues 23–101 (ILLQ…IEKK), 136–189 (DIRE…RKET), 1022–1054 (ITTT…TTTT), and 2817–2839 (NNNN…RPTR). Positions 28–62 (EQEKQAKEEKESIKDTDDKPIEDTEHSTNNDKPIE) are enriched in basic and acidic residues. A compositionally biased stretch (low complexity) spans 70–92 (TPTTTTTTKPTDEASSSSNNNNN). Over residues 136-145 (DIREPTDKPF) the composition is skewed to basic and acidic residues. A compositionally biased stretch (polar residues) spans 146 to 156 (ENTSNIETTRQ). The stretch at 167-215 (KTEAERLEQEQKQKQYDENRKETDRKLELELERLKNKKEEVEQIRAYFQ) forms a coiled coil. Positions 168 to 189 (TEAERLEQEQKQKQYDENRKET) are enriched in basic and acidic residues. Over residues 2817-2826 (NNNNNNNRYN) the composition is skewed to low complexity. Residues 2853–2857 (DTAGQ), 2913–2916 (TKAD), and 2976–2983 (GDGGIGKS) contribute to the GTP site. Disordered stretches follow at residues 3036–3086 (LQSA…LSSR), 3107–3142 (RKSS…QDYE), and 3733–3754 (VIEP…PSSS). Residues 3070–3086 (PSSSSTRTSVSTSLSSR) are compositionally biased toward low complexity. Residues 3107 to 3120 (RKSSLVEEESKRQY) show a composition bias toward basic and acidic residues. The span at 3121–3141 (DDDDESKSESSEYDDDDDQDY) shows a compositional bias: acidic residues.

This sequence belongs to the small GTPase superfamily. CpRas family.

This is Circularly permutated Ras protein 2 (cpras2) from Dictyostelium discoideum (Social amoeba).